Here is a 318-residue protein sequence, read N- to C-terminus: Pantothenate kinase (318 aa).

Gly96 to Ser103 serves as a coordination point for ATP.

It belongs to the prokaryotic pantothenate kinase family.

The protein resides in the cytoplasm. It carries out the reaction (R)-pantothenate + ATP = (R)-4'-phosphopantothenate + ADP + H(+). It participates in cofactor biosynthesis; coenzyme A biosynthesis; CoA from (R)-pantothenate: step 1/5. This Bradyrhizobium sp. (strain ORS 278) protein is Pantothenate kinase.